Consider the following 428-residue polypeptide: Adenylosuccinate synthetase (428 aa).

GTP-binding positions include 12–18 and 40–42; these read GDEGKGK and GHT. Asp-13 functions as the Proton acceptor in the catalytic mechanism. Mg(2+)-binding residues include Asp-13 and Gly-40. Residues 13 to 16, 38 to 41, Thr-128, Arg-142, Gln-222, Thr-237, and Arg-301 contribute to the IMP site; these read DEGK and NAGH. His-41 (proton donor) is an active-site residue. 297–303 contributes to the substrate binding site; the sequence is TVTGRSR. Residues Arg-303, 329–331, and 411–413 each bind GTP; these read KLD and STS.

The protein belongs to the adenylosuccinate synthetase family. In terms of assembly, homodimer. It depends on Mg(2+) as a cofactor.

Its subcellular location is the cytoplasm. The catalysed reaction is IMP + L-aspartate + GTP = N(6)-(1,2-dicarboxyethyl)-AMP + GDP + phosphate + 2 H(+). It functions in the pathway purine metabolism; AMP biosynthesis via de novo pathway; AMP from IMP: step 1/2. Its function is as follows. Plays an important role in the de novo pathway of purine nucleotide biosynthesis. Catalyzes the first committed step in the biosynthesis of AMP from IMP. This Phenylobacterium zucineum (strain HLK1) protein is Adenylosuccinate synthetase.